A 455-amino-acid chain; its full sequence is tRNA modification GTPase MnmE (455 aa).

Residues Arg-22, Glu-85, and Arg-124 each coordinate (6S)-5-formyl-5,6,7,8-tetrahydrofolate. The TrmE-type G domain occupies Gly-220–Leu-377. K(+) is bound at residue Asn-230. Residues Asn-230–Ser-235, Thr-249–Thr-255, and Asp-274–Gly-277 each bind GTP. Ser-234 contributes to the Mg(2+) binding site. Positions 249, 251, and 254 each coordinate K(+). Thr-255 contacts Mg(2+). Position 455 (Lys-455) interacts with (6S)-5-formyl-5,6,7,8-tetrahydrofolate.

This sequence belongs to the TRAFAC class TrmE-Era-EngA-EngB-Septin-like GTPase superfamily. TrmE GTPase family. In terms of assembly, homodimer. Heterotetramer of two MnmE and two MnmG subunits. K(+) is required as a cofactor.

Its subcellular location is the cytoplasm. Its function is as follows. Exhibits a very high intrinsic GTPase hydrolysis rate. Involved in the addition of a carboxymethylaminomethyl (cmnm) group at the wobble position (U34) of certain tRNAs, forming tRNA-cmnm(5)s(2)U34. The sequence is that of tRNA modification GTPase MnmE from Caldicellulosiruptor saccharolyticus (strain ATCC 43494 / DSM 8903 / Tp8T 6331).